The following is a 57-amino-acid chain: Protein translocase subunit SecE (57 aa).

A helical membrane pass occupies residues 33-53 (GLGILLVGFIGFVIFSIMTFV).

Belongs to the SecE/SEC61-gamma family. Component of the Sec protein translocase complex. Heterotrimer consisting of SecY (alpha), SecG (beta) and SecE (gamma) subunits. The heterotrimers can form oligomers, although 1 heterotrimer is thought to be able to translocate proteins. Interacts with the ribosome. May interact with SecDF, and other proteins may be involved.

Its subcellular location is the cell membrane. Essential subunit of the Sec protein translocation channel SecYEG. Clamps together the 2 halves of SecY. May contact the channel plug during translocation. The protein is Protein translocase subunit SecE of Natronomonas pharaonis (strain ATCC 35678 / DSM 2160 / CIP 103997 / JCM 8858 / NBRC 14720 / NCIMB 2260 / Gabara) (Halobacterium pharaonis).